Here is a 1083-residue protein sequence, read N- to C-terminus: uncharacterized protein (1083 aa).

Positions 93-145 (SKGNLRYVPTTSRNPSNTDTYSSSIDISSSSSSINTSDDSSGKTSSNDLSDMS) are disordered. The segment covering 108–145 (SNTDTYSSSIDISSSSSSINTSDDSSGKTSSNDLSDMS) has biased composition (low complexity).

Its subcellular location is the virion. This is an uncharacterized protein from Acanthamoeba polyphaga (Amoeba).